Reading from the N-terminus, the 103-residue chain is N(4)-acetylcytidine amidohydrolase (103 aa).

Residues 6–92 (TFFERFEQDI…VIQEIYPGLE (87 aa)) form the ASCH domain. Lys-20 functions as the Proton acceptor in the catalytic mechanism. The Nucleophile role is filled by Thr-23. The Proton donor role is filled by Glu-73.

This sequence belongs to the N(4)-acetylcytidine amidohydrolase family.

The catalysed reaction is N(4)-acetylcytidine + H2O = cytidine + acetate + H(+). The enzyme catalyses N(4)-acetyl-2'-deoxycytidine + H2O = 2'-deoxycytidine + acetate + H(+). It carries out the reaction N(4)-acetylcytosine + H2O = cytosine + acetate + H(+). In terms of biological role, catalyzes the hydrolysis of N(4)-acetylcytidine (ac4C). In Shewanella sp. (strain MR-4), this protein is N(4)-acetylcytidine amidohydrolase.